We begin with the raw amino-acid sequence, 458 residues long: tRNA modification GTPase MnmE (458 aa).

(6S)-5-formyl-5,6,7,8-tetrahydrofolate is bound by residues Arg-26, Glu-88, and Arg-127. The region spanning 224 to 378 is the TrmE-type G domain; that stretch reads GLSTAIIGRP…IEERINDIFF (155 aa). Asn-234 lines the K(+) pocket. Residues 234–239, 253–259, and 278–281 contribute to the GTP site; these read NVGKSS, TDIEGTT, and DTAG. Ser-238 lines the Mg(2+) pocket. K(+) contacts are provided by Thr-253, Ile-255, and Thr-258. Thr-259 lines the Mg(2+) pocket. A (6S)-5-formyl-5,6,7,8-tetrahydrofolate-binding site is contributed by Lys-458.

It belongs to the TRAFAC class TrmE-Era-EngA-EngB-Septin-like GTPase superfamily. TrmE GTPase family. In terms of assembly, homodimer. Heterotetramer of two MnmE and two MnmG subunits. K(+) is required as a cofactor.

The protein localises to the cytoplasm. Exhibits a very high intrinsic GTPase hydrolysis rate. Involved in the addition of a carboxymethylaminomethyl (cmnm) group at the wobble position (U34) of certain tRNAs, forming tRNA-cmnm(5)s(2)U34. This Streptococcus agalactiae serotype Ia (strain ATCC 27591 / A909 / CDC SS700) protein is tRNA modification GTPase MnmE.